A 387-amino-acid polypeptide reads, in one-letter code: MDMNSFSPMMPTSPLSMINQIKFEDEPDLKDLFITVDEPESHVTTIETFITYRIITKTSRGEFDSSEFEVRRRYQDFLWLKGKLEEAHPTLIIPPLPEKFIVKGMVERFNDDFIETRRKALHKFLNRIADHPTLTFNEDFKIFLTAQAWELSSHKKQGPGLLSRMGQTVRAVASSMRGVKNRPEEFMEMNNFIELFSQKINLIDKISQRIYKEEREYFDEMKEYGPIHILWSASEEDLVDTLKDVAGCIDRCCKATEKRMSGLSEALLPVVREYVLYSEMLMGVMKRRDQIQAELDSKVEALTYKKTDTDLLPEEIGKLEDKVECANNALKADWERWKQNMQNDIKLAFTDMAEENIHYYEQCLATWESFLTSQTNLHLEETSEDKP.

One can recognise a PX domain in the interval 30–151; that stretch reads KDLFITVDEP…IFLTAQAWEL (122 aa). A 1,2-diacyl-sn-glycero-3-phospho-(1D-myo-inositol-3-phosphate) contacts are provided by R73, Q75, K103, and R117. Residues 178-387 enclose the BAR domain; the sequence is GVKNRPEEFM…HLEETSEDKP (210 aa).

Belongs to the sorting nexin family. Heterodimer; heterodimerizes with SNX4.

Its subcellular location is the early endosome membrane. Involved in the regulation of endocytosis and in several stages of intracellular trafficking. Together with SNX4, involved in autophagosome assembly by regulating trafficking and recycling of phospholipid scramblase ATG9A. The polypeptide is Sorting nexin-7 (SNX7) (Macaca fascicularis (Crab-eating macaque)).